We begin with the raw amino-acid sequence, 109 residues long: Large ribosomal subunit protein eL42 (109 aa).

The tract at residues 23 to 53 (VSQYKKSKESTHAQGRRRYDMKQSGFGGQTK) is disordered. The span at 28-43 (KSKESTHAQGRRRYDM) shows a compositional bias: basic and acidic residues.

It belongs to the eukaryotic ribosomal protein eL42 family.

The protein localises to the cytoplasm. This chain is Large ribosomal subunit protein eL42 (RPL36A), found in Tetrahymena thermophila (strain SB210).